The sequence spans 393 residues: Small RNA 2'-O-methyltransferase (393 aa).

Positions 60, 78, and 114 each coordinate S-adenosyl-L-methionine. Residues glutamate 132, glutamate 135, histidine 136, and histidine 181 each contribute to the Mg(2+) site. Residues 283 to 309 form a disordered region; the sequence is RVSHLPRRKEQDGEQGDKPKDIGGSKA. Basic and acidic residues predominate over residues 290–305; the sequence is RKEQDGEQGDKPKDIG.

It belongs to the methyltransferase superfamily. HEN1 family. Mg(2+) is required as a cofactor.

The protein localises to the cytoplasm. The catalysed reaction is small RNA 3'-end nucleotide + S-adenosyl-L-methionine = small RNA 3'-end 2'-O-methylnucleotide + S-adenosyl-L-homocysteine + H(+). Functionally, methyltransferase that adds a 2'-O-methyl group at the 3'-end of piRNAs, a class of 24 to 30 nucleotide RNAs that are generated by a Dicer-independent mechanism and are primarily derived from transposons and other repeated sequence elements. This probably protects the 3'-end of piRNAs from uridylation activity and subsequent degradation. Stabilization of piRNAs is essential for gametogenesis. In Macaca fascicularis (Crab-eating macaque), this protein is Small RNA 2'-O-methyltransferase (HENMT1).